We begin with the raw amino-acid sequence, 104 residues long: Intracellular chorismate mutase (104 aa).

A Chorismate mutase domain is found at 23-104 (AVPEIDDLRR…LRLGRGRLGY (82 aa)). Residues arginine 59, valine 68, and glutamate 72 each coordinate chorismate.

As to quaternary structure, homodimer. Probably interacts with AroG (MSMEG_4244).

It is found in the cytoplasm. The enzyme catalyses chorismate = prephenate. It participates in metabolic intermediate biosynthesis; prephenate biosynthesis; prephenate from chorismate: step 1/1. Its activity is regulated as follows. The formation of the complex with AroG activates the chorismate mutase activity. Functionally, catalyzes the Claisen rearrangement of chorismate to prephenate. Probably involved in the aromatic amino acid biosynthesis. This is Intracellular chorismate mutase from Mycolicibacterium smegmatis (strain ATCC 700084 / mc(2)155) (Mycobacterium smegmatis).